A 120-amino-acid chain; its full sequence is Large ribosomal subunit protein uL18 (120 aa).

Belongs to the universal ribosomal protein uL18 family. In terms of assembly, part of the 50S ribosomal subunit; part of the 5S rRNA/L5/L18/L25 subcomplex. Contacts the 5S and 23S rRNAs.

Its function is as follows. This is one of the proteins that bind and probably mediate the attachment of the 5S RNA into the large ribosomal subunit, where it forms part of the central protuberance. In Bartonella tribocorum (strain CIP 105476 / IBS 506), this protein is Large ribosomal subunit protein uL18.